A 181-amino-acid polypeptide reads, in one-letter code: Protein Syd (181 aa).

It belongs to the Syd family.

Its subcellular location is the cell inner membrane. Interacts with the SecY protein in vivo. May bind preferentially to an uncomplexed state of SecY, thus functioning either as a chelating agent for excess SecY in the cell or as a regulatory factor that negatively controls the translocase function. This is Protein Syd from Salmonella agona (strain SL483).